Consider the following 546-residue polypeptide: Immunoglobulin heavy constant epsilon (546 aa).

Topologically, residues 1 to 499 (ASTQSPSVFP…EAPWTWTGLC (499 aa)) are extracellular. Ig-like domains follow at residues 6 to 103 (PSVF…KTFS), 112 to 210 (PTVK…KKCA), 214 to 318 (PRGV…TKTS), and 324 to 423 (PEVY…RAVS). Disulfide bonds link C15/C105, C29/C85, C135/C193, C239/C299, and C345/C405. N21, N49, N99, N146, N252, N264, and N275 each carry an N-linked (GlcNAc...) asparagine glycan. The chain crosses the membrane as a helical span at residues 500-520 (IFAALFLLSVSYSAAITLLMV). Residues 521–546 (QRFLSATRQGRPQTSLDYTNVLQPHA) are Cytoplasmic-facing.

In terms of assembly, the basic structural unit of both sIgE and mIgE molecules consists of two identical heavy chains and two identical light chains; disulfide-linked. N-terminal variable regions of the heavy and light chains form the antigen binding sites, whereas the C-terminal constant regions of the heavy chains interact with immune receptors to mediate effector functions. As to quaternary structure, part of IgE antibody. Interacts (via CH3) with the alpha chain/FCE1RA of IgE Fc receptor complex. Interacts (via CH3 region) with FCER2 (via C-type lectin domain); this interaction regulates IgE homeostasis. Part of IgE B cell antigen receptor complex (BCR). The BCR complex consists of one mIgE molecule responsible for antigen binding, non-covalently associated with CD79A and CD79B signaling chains. As to expression, expressed in B lymphocytes stimulated with IL4 and CD40.

The protein resides in the secreted. It localises to the cell membrane. In terms of biological role, constant region of immunoglobulin heavy chains. Immunoglobulins, also known as antibodies, are membrane-bound or secreted glycoproteins produced by B lymphocytes. In the recognition phase of humoral immunity, the membrane-bound immunoglobulins serve as receptors which, upon binding of a specific antigen, trigger the clonal expansion and differentiation of B lymphocytes into immunoglobulins-secreting plasma cells. Secreted immunoglobulins mediate the effector phase of humoral immunity, which results in the elimination of bound antigens. The antigen binding site is formed by the variable domain of one heavy chain, together with that of its associated light chain. Thus, each immunoglobulin has two antigen binding sites with remarkable affinity for a particular antigen. The variable domains are assembled by a process called V-(D)-J rearrangement and can then be subjected to somatic hypermutations which, after exposure to antigen and selection, allow affinity maturation for a particular antigen. Functionally, constant region of secreted IgE, also known as the Fc region of IgE antibody. Mediates IgE effector functions on myeloid and lymphoid cells primarily via two Fc receptors, the high-affinity IgE Fc receptor complex/FCER1A:MS4A2:FCGR1A and the low-affinity FCER2 receptor, which upon antigen/allergen cross-linking initiate signaling pathways that lead to immune cell activation and differentiation. Triggers the immediate hypersensitivity response to allergens as a host defense mechanism against helminth parasites, pathogenic bacteria and venom toxicity. When dysregulated, it can elicit harmful life-threatening allergic and anaphylactic reactions. Stimulates the high-affinity IgE Fc receptor complex/FCER1A:MS4A2:FCGR1A on mast cells, basophils and eosinophils leading to secretion of vasoactive amines, lipid mediators and cytokines that contribute to inflammatory response, tissue remodeling and cytotoxicity against microbes. On macrophages, cross-linking of FCER2 by IgE immune complexes induces intracellular killing of parasites through activation of L-Arginine-nitric oxide pathway. Activates macrophages to kill tumor cells via antigen-specific antibody-dependent cytotoxicity (ADCC). Triggers differentiation of quiescent M0 macrophages toward M1 state and reprograms M2 macrophages toward a proinflammatory state with antitumor functions. Stimulates FCER2 on B cells and initiates IgE-dependent antigen uptake and presentation to T cells. Its function is as follows. Constant region of membrane-bound IgE (long mIgE), part of the B cell receptor complex (BCR). Upon antigen cross-linking triggers quick BCR signaling, ensuring survival of IgE-switched B cells and differentiation into plasma cells, thus regulating both primary and memory IgE responses. Constant region of membrane-bound IgE (short mIgE), part of the B cell receptor complex (BCR). Upon antigen cross-linking initiates slower but sustained BCR signaling that negatively regulates mature B cell proliferation. The sequence is that of Immunoglobulin heavy constant epsilon from Homo sapiens (Human).